The sequence spans 406 residues: Nuclear hormone receptor family member nhr-133 (406 aa).

The nuclear receptor DNA-binding region spans 8–83; the sequence is SGPCEICEQP…VGMNSSKFQN (76 aa). The NR C4-type zinc-finger motif lies at 11–31; that stretch reads CEICEQPAHGNHFGVLSCRAC. The NR C4-type; degenerate zinc-finger motif lies at 47–66; it reads DRVCRKGNCIGNDLYRCKIC. In terms of domain architecture, NR LBD spans 150-406; that stretch reads YSWSPNHYPN…YSHPEMFEFS (257 aa).

The protein belongs to the nuclear hormone receptor family.

The protein resides in the nucleus. In terms of biological role, orphan nuclear receptor. In Caenorhabditis elegans, this protein is Nuclear hormone receptor family member nhr-133.